The following is a 213-amino-acid chain: tRNA (guanine-N(7)-)-methyltransferase (213 aa).

Positions 40, 65, 92, and 118 each coordinate S-adenosyl-L-methionine. D118 is an active-site residue. Residues K122 and D154 each contribute to the substrate site.

It belongs to the class I-like SAM-binding methyltransferase superfamily. TrmB family.

The enzyme catalyses guanosine(46) in tRNA + S-adenosyl-L-methionine = N(7)-methylguanosine(46) in tRNA + S-adenosyl-L-homocysteine. The protein operates within tRNA modification; N(7)-methylguanine-tRNA biosynthesis. In terms of biological role, catalyzes the formation of N(7)-methylguanine at position 46 (m7G46) in tRNA. In Synechococcus elongatus (strain ATCC 33912 / PCC 7942 / FACHB-805) (Anacystis nidulans R2), this protein is tRNA (guanine-N(7)-)-methyltransferase.